Here is a 142-residue protein sequence, read N- to C-terminus: Large ribosomal subunit protein uL13 (142 aa).

This sequence belongs to the universal ribosomal protein uL13 family. As to quaternary structure, part of the 50S ribosomal subunit.

In terms of biological role, this protein is one of the early assembly proteins of the 50S ribosomal subunit, although it is not seen to bind rRNA by itself. It is important during the early stages of 50S assembly. In Thermococcus kodakarensis (strain ATCC BAA-918 / JCM 12380 / KOD1) (Pyrococcus kodakaraensis (strain KOD1)), this protein is Large ribosomal subunit protein uL13.